The primary structure comprises 259 residues: Ras-related protein Rab-34 (259 aa).

M1 is modified (N-acetylmethionine). GTP contacts are provided by S62, V63, G64, K65, T66, D78, Y81, and T84. T66 serves as a coordination point for Mg(2+). Residues 71–89 (RFCKDTFDKNYKATIGVDF) carry the Switch 1 motif. Mg(2+) contacts are provided by T84 and D107. The Switch 2 motif lies at 108–127 (TAGQERFKCIASTYYRGAQA). GTP contacts are provided by G110, K167, D169, and S198. A phosphoserine mark is found at S241 and S244. Residues C257 and C258 are each lipidated (S-geranylgeranyl cysteine).

This sequence belongs to the small GTPase superfamily. Rab family. Interacts with RILP. The GTP-bound form interacts with REP15. The cofactor is Mg(2+).

It is found in the cytoplasm. It localises to the golgi apparatus. The protein localises to the cytoplasmic vesicle. The protein resides in the phagosome. Its subcellular location is the phagosome membrane. It is found in the cell projection. It localises to the cilium. The protein localises to the cytoskeleton. The protein resides in the microtubule organizing center. Its subcellular location is the centrosome. It is found in the centriole. It carries out the reaction GTP + H2O = GDP + phosphate + H(+). Regulated by guanine nucleotide exchange factors (GEFs) which promote the exchange of bound GDP for free GTP. Regulated by GTPase activating proteins (GAPs) which increase the GTP hydrolysis activity. Inhibited by GDP dissociation inhibitors (GDIs). The small GTPases Rab are key regulators of intracellular membrane trafficking, from the formation of transport vesicles to their fusion with membranes. Rabs cycle between an inactive GDP-bound form and an active GTP-bound form that is able to recruit to membranes different sets of downstream effectors directly responsible for vesicle formation, movement, tethering and fusion. RAB34 transports protein involved in the redistribution of lysosomes to the peri-Golgi region. Plays a role in the maturation of phagosomes that engulf pathogens, such as S.aureus and M.tuberculosis. Plays a role in the fusion of phagosomes with lysosomes. Involved in ciliogenesis. In particular, it is required for early steps of the intracellular cilium assembly pathway initiated by trafficking and docking of ciliary vesicles to the centrioles in the cytoplasm, followed by axoneme formation in the cytoplasm. After axoneme elongation, the centrioles migrate close to the cell surface so that ciliary vesicles can fuse with the plasma membrane to expose cilia to the extracellular space. It seems dispensable for ciliogenesis via the extracellular pathway where cilium assembly begins after migration and docking of the centriole to the plasma membrane. Also acts as a positive regulator of hedgehog signaling and regulates ciliary function. The protein is Ras-related protein Rab-34 of Homo sapiens (Human).